The primary structure comprises 389 residues: Cytochrome b (389 aa).

A run of 4 helical transmembrane segments spans residues 36–56, 80–102, 117–137, and 183–203; these read MGSLLGLCLVIQICTGIFLAM, WLIRYMHANGASFFFMCMYTHIA, VWTVGVIIFVLTMAAAFLGYC, and FFAFHYLVPFIIAAVVIMHMM. Heme b is bound by residues histidine 86 and histidine 100. Heme b contacts are provided by histidine 187 and histidine 201. Histidine 206 is a binding site for a ubiquinone. Transmembrane regions (helical) follow at residues 229 to 249, 293 to 313, 325 to 345, and 352 to 372; these read FVFKDLITVFVFMILFSLFVF, LLGVITMFAAILVLLVLPITD, LSKFFFFIFVFNFVLLGIIGM, and FVLIGQISTGIYFAYFIIIVP.

Belongs to the cytochrome b family. Fungal cytochrome b-c1 complex contains 10 subunits; 3 respiratory subunits, 2 core proteins and 5 low-molecular weight proteins. Cytochrome b-c1 complex is a homodimer. It depends on heme b as a cofactor.

The protein resides in the mitochondrion inner membrane. Functionally, component of the ubiquinol-cytochrome c reductase complex (complex III or cytochrome b-c1 complex) that is part of the mitochondrial respiratory chain. The b-c1 complex mediates electron transfer from ubiquinol to cytochrome c. Contributes to the generation of a proton gradient across the mitochondrial membrane that is then used for ATP synthesis. The sequence is that of Cytochrome b (COB) from Vanderwaltozyma polyspora (strain ATCC 22028 / DSM 70294 / BCRC 21397 / CBS 2163 / NBRC 10782 / NRRL Y-8283 / UCD 57-17) (Kluyveromyces polysporus).